The sequence spans 451 residues: UDP-N-acetylmuramoylalanine--D-glutamate ligase (451 aa).

ATP is bound at residue G119–T125.

This sequence belongs to the MurCDEF family.

It localises to the cytoplasm. The enzyme catalyses UDP-N-acetyl-alpha-D-muramoyl-L-alanine + D-glutamate + ATP = UDP-N-acetyl-alpha-D-muramoyl-L-alanyl-D-glutamate + ADP + phosphate + H(+). The protein operates within cell wall biogenesis; peptidoglycan biosynthesis. In terms of biological role, cell wall formation. Catalyzes the addition of glutamate to the nucleotide precursor UDP-N-acetylmuramoyl-L-alanine (UMA). The protein is UDP-N-acetylmuramoylalanine--D-glutamate ligase of Streptococcus agalactiae serotype Ia (strain ATCC 27591 / A909 / CDC SS700).